The sequence spans 451 residues: ATP-dependent protease ATPase subunit HslU (451 aa).

ATP is bound by residues I26, 68–73 (GVGKTE), D263, E328, and R400.

It belongs to the ClpX chaperone family. HslU subfamily. A double ring-shaped homohexamer of HslV is capped on each side by a ring-shaped HslU homohexamer. The assembly of the HslU/HslV complex is dependent on binding of ATP.

It is found in the cytoplasm. Functionally, ATPase subunit of a proteasome-like degradation complex; this subunit has chaperone activity. The binding of ATP and its subsequent hydrolysis by HslU are essential for unfolding of protein substrates subsequently hydrolyzed by HslV. HslU recognizes the N-terminal part of its protein substrates and unfolds these before they are guided to HslV for hydrolysis. This is ATP-dependent protease ATPase subunit HslU from Dichelobacter nodosus (strain VCS1703A).